Consider the following 126-residue polypeptide: Glycine cleavage system H protein (126 aa).

A Lipoyl-binding domain is found at 22-104 (IAYVGITDYA…YGKGWLIKIK (83 aa)). Residue Lys63 is modified to N6-lipoyllysine.

The protein belongs to the GcvH family. The glycine cleavage system is composed of four proteins: P, T, L and H. It depends on (R)-lipoate as a cofactor.

In terms of biological role, the glycine cleavage system catalyzes the degradation of glycine. The H protein shuttles the methylamine group of glycine from the P protein to the T protein. The chain is Glycine cleavage system H protein from Phocaeicola vulgatus (strain ATCC 8482 / DSM 1447 / JCM 5826 / CCUG 4940 / NBRC 14291 / NCTC 11154) (Bacteroides vulgatus).